The primary structure comprises 401 residues: Acetylornithine aminotransferase (401 aa).

Pyridoxal 5'-phosphate contacts are provided by residues 121–122 and Phe-154; that span reads GA. Arg-157 contributes to the N(2)-acetyl-L-ornithine binding site. Pyridoxal 5'-phosphate is bound at residue 239–242; that stretch reads DEVQ. Position 268 is an N6-(pyridoxal phosphate)lysine (Lys-268). Ser-296 contacts N(2)-acetyl-L-ornithine. Residue Thr-297 coordinates pyridoxal 5'-phosphate.

Belongs to the class-III pyridoxal-phosphate-dependent aminotransferase family. ArgD subfamily. In terms of assembly, homodimer. Pyridoxal 5'-phosphate serves as cofactor.

It is found in the cytoplasm. It carries out the reaction N(2)-acetyl-L-ornithine + 2-oxoglutarate = N-acetyl-L-glutamate 5-semialdehyde + L-glutamate. It functions in the pathway amino-acid biosynthesis; L-arginine biosynthesis; N(2)-acetyl-L-ornithine from L-glutamate: step 4/4. The polypeptide is Acetylornithine aminotransferase (Myxococcus xanthus).